Consider the following 258-residue polypeptide: Calcium release-activated calcium channel protein 1 (258 aa).

Topologically, residues 1 to 63 are cytoplasmic; the sequence is MYPECGVETK…SRAKLKASSR (63 aa). A helical membrane pass occupies residues 64–81; the sequence is TSALLSGFAMVAMVEVQL. The Extracellular segment spans residues 82-91; the sequence is EPNHAYPPGL. Residues 92-112 form a helical membrane-spanning segment; it reads LIAFSACTTVLVAVHLFALMV. Topologically, residues 113–145 are cytoplasmic; sequence STCILPNIEAVSNVHNLNSVKESPHERMHHHIE. A helical membrane pass occupies residues 146 to 166; it reads LAWAFSTVIGTLLFLAEVVLL. At 167 to 192 the chain is on the extracellular side; sequence CWVKFLPVNSPKISSNETSAVSSGQA. N182 carries N-linked (GlcNAc...) asparagine glycosylation. The chain crosses the membrane as a helical span at residues 193–213; sequence AAITSTAIMVPFGLVFIVFAV. At 214 to 258 the chain is on the cytoplasmic side; sequence HFYRSLVSHKTDRQFQELNELAELAQLQDQLDHRGDPVQSPVHYA.

It belongs to the Orai family.

It localises to the cell membrane. In terms of biological role, ca(2+) release-activated Ca(2+) (CRAC) channel subunit which mediates Ca(2+) influx following depletion of intracellular Ca(2+) stores. The sequence is that of Calcium release-activated calcium channel protein 1 (orai1) from Xenopus laevis (African clawed frog).